Reading from the N-terminus, the 471-residue chain is ATP synthase subunit beta (471 aa).

Residue 153 to 160 (GGAGVGKT) participates in ATP binding.

The protein belongs to the ATPase alpha/beta chains family. As to quaternary structure, F-type ATPases have 2 components, CF(1) - the catalytic core - and CF(0) - the membrane proton channel. CF(1) has five subunits: alpha(3), beta(3), gamma(1), delta(1), epsilon(1). CF(0) has four main subunits: a(1), b(1), b'(1) and c(9-12).

Its subcellular location is the cell membrane. The catalysed reaction is ATP + H2O + 4 H(+)(in) = ADP + phosphate + 5 H(+)(out). Produces ATP from ADP in the presence of a proton gradient across the membrane. The catalytic sites are hosted primarily by the beta subunits. In Roseiflexus sp. (strain RS-1), this protein is ATP synthase subunit beta.